Consider the following 395-residue polypeptide: Chorismate synthase (395 aa).

R48 lines the NADP(+) pocket. 125-127 (RSS) serves as a coordination point for FMN. The tract at residues 264-292 (RNEDWTFDDGESFDHVESEEGDPVPVGND) is disordered. FMN-binding positions include G298, 313–317 (HAPTS), and R340. The segment at 373-395 (PDRVDGNPGQYDTDYHPSSPDND) is disordered.

This sequence belongs to the chorismate synthase family. It depends on FMNH2 as a cofactor.

It carries out the reaction 5-O-(1-carboxyvinyl)-3-phosphoshikimate = chorismate + phosphate. It functions in the pathway metabolic intermediate biosynthesis; chorismate biosynthesis; chorismate from D-erythrose 4-phosphate and phosphoenolpyruvate: step 7/7. Catalyzes the anti-1,4-elimination of the C-3 phosphate and the C-6 proR hydrogen from 5-enolpyruvylshikimate-3-phosphate (EPSP) to yield chorismate, which is the branch point compound that serves as the starting substrate for the three terminal pathways of aromatic amino acid biosynthesis. This reaction introduces a second double bond into the aromatic ring system. This is Chorismate synthase from Halorubrum lacusprofundi (strain ATCC 49239 / DSM 5036 / JCM 8891 / ACAM 34).